The primary structure comprises 120 residues: Small ribosomal subunit protein bS6 (120 aa).

The span at 97–112 shows a compositional bias: polar residues; the sequence is SNEPSPILKNQSTENT. Positions 97–120 are disordered; it reads SNEPSPILKNQSTENTPVIDVTAN.

It belongs to the bacterial ribosomal protein bS6 family.

Functionally, binds together with bS18 to 16S ribosomal RNA. The polypeptide is Small ribosomal subunit protein bS6 (Rickettsia bellii (strain RML369-C)).